We begin with the raw amino-acid sequence, 548 residues long: CTP synthase (548 aa).

Positions 1-267 are amidoligase domain; the sequence is MKTKFIFITG…DQKIAIMLQL (267 aa). A CTP-binding site is contributed by serine 14. Serine 14 contacts UTP. Residues 15 to 20 and aspartate 72 each bind ATP; that span reads SLGKGL. Mg(2+)-binding residues include aspartate 72 and glutamate 141. CTP-binding positions include 148-150, 188-193, and lysine 224; these read DIE and KTKPTQ. Residues 188–193 and lysine 224 contribute to the UTP site; that span reads KTKPTQ. Residues 292–545 form the Glutamine amidotransferase type-1 domain; that stretch reads TIGIVGKYVD…IKAAGKQAVK (254 aa). Glycine 354 contributes to the L-glutamine binding site. Cysteine 381 serves as the catalytic Nucleophile; for glutamine hydrolysis. Residues 382–385, glutamate 405, and arginine 473 contribute to the L-glutamine site; that span reads LGMQ. Active-site residues include histidine 518 and glutamate 520.

Belongs to the CTP synthase family. In terms of assembly, homotetramer.

The enzyme catalyses UTP + L-glutamine + ATP + H2O = CTP + L-glutamate + ADP + phosphate + 2 H(+). It catalyses the reaction L-glutamine + H2O = L-glutamate + NH4(+). The catalysed reaction is UTP + NH4(+) + ATP = CTP + ADP + phosphate + 2 H(+). Its pathway is pyrimidine metabolism; CTP biosynthesis via de novo pathway; CTP from UDP: step 2/2. With respect to regulation, allosterically activated by GTP, when glutamine is the substrate; GTP has no effect on the reaction when ammonia is the substrate. The allosteric effector GTP functions by stabilizing the protein conformation that binds the tetrahedral intermediate(s) formed during glutamine hydrolysis. Inhibited by the product CTP, via allosteric rather than competitive inhibition. In terms of biological role, catalyzes the ATP-dependent amination of UTP to CTP with either L-glutamine or ammonia as the source of nitrogen. Regulates intracellular CTP levels through interactions with the four ribonucleotide triphosphates. This Oleidesulfovibrio alaskensis (strain ATCC BAA-1058 / DSM 17464 / G20) (Desulfovibrio alaskensis) protein is CTP synthase.